Consider the following 26-residue polypeptide: Coenzyme PQQ synthesis protein A (26 aa).

A cross-link (pyrroloquinoline quinone (Glu-Tyr)) is located at residues 16–20; sequence EINSY.

Belongs to the PqqA family.

Its pathway is cofactor biosynthesis; pyrroloquinoline quinone biosynthesis. In terms of biological role, required for coenzyme pyrroloquinoline quinone (PQQ) biosynthesis. PQQ is probably formed by cross-linking a specific glutamate to a specific tyrosine residue and excising these residues from the peptide. This is Coenzyme PQQ synthesis protein A from Gluconacetobacter diazotrophicus (strain ATCC 49037 / DSM 5601 / CCUG 37298 / CIP 103539 / LMG 7603 / PAl5).